A 190-amino-acid chain; its full sequence is dTTP/UTP pyrophosphatase (190 aa).

Asp-67 (proton acceptor) is an active-site residue.

The protein belongs to the Maf family. YhdE subfamily. A divalent metal cation is required as a cofactor.

The protein resides in the cytoplasm. The catalysed reaction is dTTP + H2O = dTMP + diphosphate + H(+). It carries out the reaction UTP + H2O = UMP + diphosphate + H(+). Its function is as follows. Nucleoside triphosphate pyrophosphatase that hydrolyzes dTTP and UTP. May have a dual role in cell division arrest and in preventing the incorporation of modified nucleotides into cellular nucleic acids. The sequence is that of dTTP/UTP pyrophosphatase from Aquifex aeolicus (strain VF5).